The sequence spans 491 residues: Protein nucleotidyltransferase YdiU (491 aa).

Positions 94, 96, 97, 117, 129, 130, 180, and 187 each coordinate ATP. The active-site Proton acceptor is Asp256. Residues Asn257 and Asp266 each contribute to the Mg(2+) site. Asp266 lines the ATP pocket.

The protein belongs to the SELO family. The cofactor is Mg(2+). Mn(2+) is required as a cofactor.

The catalysed reaction is L-seryl-[protein] + ATP = 3-O-(5'-adenylyl)-L-seryl-[protein] + diphosphate. The enzyme catalyses L-threonyl-[protein] + ATP = 3-O-(5'-adenylyl)-L-threonyl-[protein] + diphosphate. It catalyses the reaction L-tyrosyl-[protein] + ATP = O-(5'-adenylyl)-L-tyrosyl-[protein] + diphosphate. It carries out the reaction L-histidyl-[protein] + UTP = N(tele)-(5'-uridylyl)-L-histidyl-[protein] + diphosphate. The catalysed reaction is L-seryl-[protein] + UTP = O-(5'-uridylyl)-L-seryl-[protein] + diphosphate. The enzyme catalyses L-tyrosyl-[protein] + UTP = O-(5'-uridylyl)-L-tyrosyl-[protein] + diphosphate. Its function is as follows. Nucleotidyltransferase involved in the post-translational modification of proteins. It can catalyze the addition of adenosine monophosphate (AMP) or uridine monophosphate (UMP) to a protein, resulting in modifications known as AMPylation and UMPylation. The polypeptide is Protein nucleotidyltransferase YdiU (Clostridium botulinum (strain ATCC 19397 / Type A)).